Reading from the N-terminus, the 211-residue chain is MELADIRREYTKGGLRRKDLKNDPIDQFNFWLEQAIKANLSDPTAMTVATVDKDGMPFQRIVLLKNVDKDGFVFYTNLGSRKAQHLEHNSKISLHFPWHPLERQVHITGVAEKLTAMENMKYFTSRPKESQLAAMASRQSSRISARGVLEGKFLELKQKFANGEIPVPSFWGGFRVKPQSIEFWQGGEHRLHDRFLYSQEQGEWHIDRLAP.

Residues 7-10 and lysine 65 each bind substrate; that span reads RREY. FMN is bound by residues 60 to 65, 75 to 76, arginine 81, lysine 82, and glutamine 104; these read RIVLLK and YT. Substrate contacts are provided by tyrosine 122, arginine 126, and serine 130. FMN contacts are provided by residues 139-140 and tryptophan 184; that span reads QS. 190-192 lines the substrate pocket; sequence RLH. FMN is bound at residue arginine 194.

It belongs to the pyridoxamine 5'-phosphate oxidase family. Homodimer. Requires FMN as cofactor.

The catalysed reaction is pyridoxamine 5'-phosphate + O2 + H2O = pyridoxal 5'-phosphate + H2O2 + NH4(+). The enzyme catalyses pyridoxine 5'-phosphate + O2 = pyridoxal 5'-phosphate + H2O2. It participates in cofactor metabolism; pyridoxal 5'-phosphate salvage; pyridoxal 5'-phosphate from pyridoxamine 5'-phosphate: step 1/1. The protein operates within cofactor metabolism; pyridoxal 5'-phosphate salvage; pyridoxal 5'-phosphate from pyridoxine 5'-phosphate: step 1/1. Its function is as follows. Catalyzes the oxidation of either pyridoxine 5'-phosphate (PNP) or pyridoxamine 5'-phosphate (PMP) into pyridoxal 5'-phosphate (PLP). In Vibrio vulnificus (strain CMCP6), this protein is Pyridoxine/pyridoxamine 5'-phosphate oxidase.